Consider the following 372-residue polypeptide: Glutamate 5-kinase (372 aa).

K14 is an ATP binding site. S54, D141, and N153 together coordinate substrate. ATP is bound at residue 173–174; the sequence is TD. One can recognise a PUA domain in the interval 280-358; sequence RGTLVLDDGA…DAIVGLLGYM (79 aa).

Belongs to the glutamate 5-kinase family.

It is found in the cytoplasm. It carries out the reaction L-glutamate + ATP = L-glutamyl 5-phosphate + ADP. The protein operates within amino-acid biosynthesis; L-proline biosynthesis; L-glutamate 5-semialdehyde from L-glutamate: step 1/2. Functionally, catalyzes the transfer of a phosphate group to glutamate to form L-glutamate 5-phosphate. The chain is Glutamate 5-kinase from Pseudomonas fluorescens (strain Pf0-1).